Reading from the N-terminus, the 238-residue chain is Pyridoxine 5'-phosphate synthase (238 aa).

The 3-amino-2-oxopropyl phosphate site is built by Asn7 and Arg18. His43 acts as the Proton acceptor in catalysis. 1-deoxy-D-xylulose 5-phosphate-binding residues include Arg45 and His50. Glu70 (proton acceptor) is an active-site residue. Thr100 provides a ligand contact to 1-deoxy-D-xylulose 5-phosphate. The active-site Proton donor is the His190. 3-amino-2-oxopropyl phosphate is bound by residues Asp191 and Gly213–His214.

The protein belongs to the PNP synthase family. In terms of assembly, homooctamer; tetramer of dimers.

It is found in the cytoplasm. It catalyses the reaction 3-amino-2-oxopropyl phosphate + 1-deoxy-D-xylulose 5-phosphate = pyridoxine 5'-phosphate + phosphate + 2 H2O + H(+). The protein operates within cofactor biosynthesis; pyridoxine 5'-phosphate biosynthesis; pyridoxine 5'-phosphate from D-erythrose 4-phosphate: step 5/5. Catalyzes the complicated ring closure reaction between the two acyclic compounds 1-deoxy-D-xylulose-5-phosphate (DXP) and 3-amino-2-oxopropyl phosphate (1-amino-acetone-3-phosphate or AAP) to form pyridoxine 5'-phosphate (PNP) and inorganic phosphate. This is Pyridoxine 5'-phosphate synthase from Phocaeicola vulgatus (strain ATCC 8482 / DSM 1447 / JCM 5826 / CCUG 4940 / NBRC 14291 / NCTC 11154) (Bacteroides vulgatus).